The primary structure comprises 818 residues: Auxin response factor 12 (818 aa).

Positions 1 to 10 (MSSSSAASIG) are enriched in low complexity. The disordered stretch occupies residues 1–24 (MSSSSAASIGPPQPPPPPAPPEEE). Pro residues predominate over residues 11–20 (PPQPPPPPAP). Positions 135-237 (FCKTLTASDT…QLLLGIRRAS (103 aa)) form a DNA-binding region, TF-B3. Disordered regions lie at residues 526–565 (NDQKQKIQPDQSYQVPTSAVLPSPTSLPSHLREKFGFSDP) and 629–648 (GSVLHNSPTSKDGSVENKIG). Polar residues predominate over residues 629-640 (GSVLHNSPTSKD). One can recognise a PB1 domain in the interval 719–803 (RTFVKVYKSG…WYIKILSPED (85 aa)).

This sequence belongs to the ARF family. Homodimers and heterodimers. Expressed in roots, culms, leaves and young panicles.

It localises to the nucleus. Functionally, auxin response factors (ARFs) are transcriptional factors that bind specifically to the DNA sequence 5'-TGTCTC-3' found in the auxin-responsive promoter elements (AuxREs). The protein is Auxin response factor 12 (ARF12) of Oryza sativa subsp. japonica (Rice).